We begin with the raw amino-acid sequence, 295 residues long: Probable ketoamine kinase slr1563 (295 aa).

Residue 99-101 participates in ATP binding; sequence EWL. D201 acts as the Proton acceptor in catalysis.

Belongs to the fructosamine kinase family.

Ketoamine kinase that phosphorylates ketoamines on the third carbon of the sugar moiety to generate ketoamine 3-phosphate. This is Probable ketoamine kinase slr1563 from Synechocystis sp. (strain ATCC 27184 / PCC 6803 / Kazusa).